The sequence spans 242 residues: Ribose-5-phosphate isomerase A (242 aa).

Substrate is bound by residues 39–42, 95–98, and 108–111; these read SGST, DGAD, and KGGG. Glu117 (proton acceptor) is an active-site residue. A substrate-binding site is contributed by Lys135.

Belongs to the ribose 5-phosphate isomerase family. In terms of assembly, homodimer.

It catalyses the reaction aldehydo-D-ribose 5-phosphate = D-ribulose 5-phosphate. The protein operates within carbohydrate degradation; pentose phosphate pathway; D-ribose 5-phosphate from D-ribulose 5-phosphate (non-oxidative stage): step 1/1. In terms of biological role, catalyzes the reversible conversion of ribose-5-phosphate to ribulose 5-phosphate. The sequence is that of Ribose-5-phosphate isomerase A from Chlamydia trachomatis serovar L2 (strain ATCC VR-902B / DSM 19102 / 434/Bu).